Consider the following 106-residue polypeptide: Iron-sulfur cluster assembly protein CyaY (106 aa).

The protein belongs to the frataxin family.

In terms of biological role, involved in iron-sulfur (Fe-S) cluster assembly. May act as a regulator of Fe-S biogenesis. The chain is Iron-sulfur cluster assembly protein CyaY from Escherichia coli O7:K1 (strain IAI39 / ExPEC).